The sequence spans 1679 residues: [F-actin]-monooxygenase mical2b (1679 aa).

Positions 2 to 494 are monooxygenase domain; it reads GETEEERTSQ…RHLFISGEQD (493 aa). Residues Cys97, 97-125, Glu116, Arg118, Arg123, Asn125, and Asp398 each bind FAD; that span reads CGFR…SRNN. Residues 516–619 enclose the Calponin-homology (CH) domain; that stretch reads EVRPGRLLLW…MVLYLSKFYE (104 aa). A Nuclear localization signal motif is present at residues 658–679; that stretch reads RKRIPKLDKKLEESDVNRKRKK. Disordered regions lie at residues 661–772, 818–838, 874–907, 1073–1163, 1194–1247, 1259–1283, 1302–1342, and 1473–1509; these read IPKL…KAKW, SAYK…TPTL, SSLF…ESST, STRH…RSTA, KPED…DEIP, EYPK…ISFS, DLTN…PAPP, and RNKA…KKKE. Composition is skewed to basic and acidic residues over residues 662–674 and 697–707; these read PKLD…SDVN and GEREEQKENKV. Positions 874-888 are enriched in polar residues; sequence SSLFTGNPAQPQTDE. The LIM zinc-binding domain occupies 1011–1073; the sequence is DTCVFCQKRV…KMHFSQRKTS (63 aa). Over residues 1086 to 1099 the composition is skewed to low complexity; it reads IRSSSITISNHTST. A compositionally biased stretch (polar residues) spans 1112–1123; sequence DSSTQQDLQTLP. A compositionally biased stretch (basic and acidic residues) spans 1133–1143; that stretch reads EVKDSSKKADP. Low complexity predominate over residues 1144–1154; the sequence is ADSAPACPDSP. Acidic residues predominate over residues 1202 to 1211; sequence LAEEDGNSDF. Polar residues predominate over residues 1220–1242; sequence SKKPSNPSTDSNCLPTKDNSSTP. The segment covering 1259–1270 has biased composition (low complexity); the sequence is EYPKPSSSSPEP. The span at 1302–1325 shows a compositional bias: polar residues; sequence DLTNPGKSGAEEQQQQHVKPSISL. Residues 1333–1342 show a composition bias toward pro residues; the sequence is THPQPEPAPP. The span at 1475–1489 shows a compositional bias: low complexity; that stretch reads KASAQQQQQQKSNSS. Residues 1517-1667 enclose the bMERB domain; sequence KSDELKRLHR…EKAEDRDLES (151 aa).

The protein belongs to the Mical family. FAD serves as cofactor.

Its subcellular location is the nucleus. It localises to the cytoplasm. It catalyses the reaction L-methionyl-[F-actin] + NADPH + O2 + H(+) = L-methionyl-(R)-S-oxide-[F-actin] + NADP(+) + H2O. Nuclear monooxygenase that promotes depolymerization of F-actin by mediating oxidation of specific methionine residues on actin and regulates the srf signaling. Acts by modifying nuclear actin subunits through the addition of oxygen to form methionine-sulfoxide, leading to promote actin filament severing and prevent repolymerization. Acts as a key regulator of the srf signaling pathway elicited by nerve growth factor and serum: mediates oxidation and subsequent depolymerization of nuclear actin, leading to increase mkl1/mrtf-a presence in the nucleus and promote srf:mkl1/mrtf-a-dependent gene transcription. The sequence is that of [F-actin]-monooxygenase mical2b from Danio rerio (Zebrafish).